Reading from the N-terminus, the 92-residue chain is Small ribosomal subunit protein uS19 (92 aa).

This sequence belongs to the universal ribosomal protein uS19 family.

Protein S19 forms a complex with S13 that binds strongly to the 16S ribosomal RNA. The polypeptide is Small ribosomal subunit protein uS19 (Psychromonas ingrahamii (strain DSM 17664 / CCUG 51855 / 37)).